Consider the following 196-residue polypeptide: MYLIPTVIEQTNRGERAYDIYSRLLKDRIVFLGSPIDDQVANSIVSQLLFLAAEDPDKDISLYINSPGGSITAGLAIYDTMQFIKPDVSTICIGMAASMGAFLLAAGAKGKRFALPNSEIMIHQPLGGAQGQATEIEIAAKRILFLRDKLNRILSENTGQPIEVIERDTDRDNFMTAQKAMEYGIIDRVLTRADEK.

The active-site Nucleophile is the S98. The active site involves H123.

The protein belongs to the peptidase S14 family. Fourteen ClpP subunits assemble into 2 heptameric rings which stack back to back to give a disk-like structure with a central cavity, resembling the structure of eukaryotic proteasomes.

The protein localises to the cytoplasm. The catalysed reaction is Hydrolysis of proteins to small peptides in the presence of ATP and magnesium. alpha-casein is the usual test substrate. In the absence of ATP, only oligopeptides shorter than five residues are hydrolyzed (such as succinyl-Leu-Tyr-|-NHMec, and Leu-Tyr-Leu-|-Tyr-Trp, in which cleavage of the -Tyr-|-Leu- and -Tyr-|-Trp bonds also occurs).. Functionally, cleaves peptides in various proteins in a process that requires ATP hydrolysis. Has a chymotrypsin-like activity. Plays a major role in the degradation of misfolded proteins. ClpXP is involved in the complete degradation of the Site-2 clipped anti-sigma-W factor RsiW. This results in the release of SigW and the transcription activation of the genes under the control of the sigma-W factor. The sequence is that of ATP-dependent Clp protease proteolytic subunit from Geobacillus kaustophilus (strain HTA426).